The chain runs to 697 residues: Potassium-transporting ATPase ATP-binding subunit (697 aa).

A run of 4 helical transmembrane segments spans residues 55–75 (PIMF…FLPS), 79–99 (SIPG…VLFA), 245–265 (LTLI…YLGF), and 271–291 (VLVA…LSAI). The active-site 4-aspartylphosphate intermediate is the Asp324. ATP-binding positions include Asp361, Glu365, 393 to 400 (FKAETRMS), and Lys412. Positions 535 and 539 each coordinate Mg(2+). Transmembrane regions (helical) follow at residues 605-625 (FAII…LNIM), 633-653 (AILS…PLAM), and 677-697 (GGVI…GLFI).

This sequence belongs to the cation transport ATPase (P-type) (TC 3.A.3) family. Type IA subfamily. The system is composed of three essential subunits: KdpA, KdpB and KdpC.

It localises to the cell membrane. It catalyses the reaction K(+)(out) + ATP + H2O = K(+)(in) + ADP + phosphate + H(+). Its function is as follows. Part of the high-affinity ATP-driven potassium transport (or Kdp) system, which catalyzes the hydrolysis of ATP coupled with the electrogenic transport of potassium into the cytoplasm. This subunit is responsible for energy coupling to the transport system and for the release of the potassium ions to the cytoplasm. The chain is Potassium-transporting ATPase ATP-binding subunit from Bacillus anthracis (strain CDC 684 / NRRL 3495).